Reading from the N-terminus, the 475-residue chain is Ribulose bisphosphate carboxylase large chain (475 aa).

Residues 1–2 (MS) constitute a propeptide that is removed on maturation. At P3 the chain carries N-acetylproline. K14 is modified (N6,N6,N6-trimethyllysine). Substrate is bound by residues N123 and T173. The active-site Proton acceptor is K175. Residue K177 participates in substrate binding. Residues K201, D203, and E204 each contribute to the Mg(2+) site. K201 carries the N6-carboxylysine modification. Residue H294 is the Proton acceptor of the active site. The substrate site is built by R295, H327, and S379.

Belongs to the RuBisCO large chain family. Type I subfamily. As to quaternary structure, heterohexadecamer of 8 large chains and 8 small chains; disulfide-linked. The disulfide link is formed within the large subunit homodimers. The cofactor is Mg(2+). Post-translationally, the disulfide bond which can form in the large chain dimeric partners within the hexadecamer appears to be associated with oxidative stress and protein turnover.

The protein resides in the plastid. It localises to the chloroplast. The catalysed reaction is 2 (2R)-3-phosphoglycerate + 2 H(+) = D-ribulose 1,5-bisphosphate + CO2 + H2O. It carries out the reaction D-ribulose 1,5-bisphosphate + O2 = 2-phosphoglycolate + (2R)-3-phosphoglycerate + 2 H(+). Functionally, ruBisCO catalyzes two reactions: the carboxylation of D-ribulose 1,5-bisphosphate, the primary event in carbon dioxide fixation, as well as the oxidative fragmentation of the pentose substrate in the photorespiration process. Both reactions occur simultaneously and in competition at the same active site. This is Ribulose bisphosphate carboxylase large chain from Castanea sativa (Sweet chestnut).